The following is a 708-amino-acid chain: Radial spoke head protein 6 homolog A (708 aa).

4 disordered regions span residues 1 to 94 (MGEP…GYTP), 376 to 407 (ETHG…IIPK), 495 to 514 (EEEG…FEEN), and 663 to 708 (GPEI…DLED). The span at 10–32 (PSQTRRASQGSERARSQEYSQPL) shows a compositional bias: polar residues. The segment covering 47–56 (RGSRSSQGSQ) has biased composition (low complexity). Positions 495 to 504 (EEEGDEEEEG) are enriched in acidic residues. Over residues 680 to 690 (LKAAQEQALAA) the composition is skewed to low complexity. Positions 691 to 708 (AEEEEEDEEEEEDEDLED) are enriched in acidic residues.

This sequence belongs to the flagellar radial spoke RSP4/6 family. Component of the axonemal radial spoke 1 (RS1) and 2 (RS2) complexes, at least composed of spoke head proteins RSPH1, RSPH3, RSPH9 and the cilia-specific component RSPH4A or sperm-specific component RSPH6A, spoke stalk proteins RSPH14, DNAJB13, DYDC1, ROPN1L and NME5, and the RS1 complex-specific anchor protein IQUB. Interacts with RSPH1. Interacts with RSPH3B. Interacts with RSPH4A. Interacts with RSPH9. Interacts with RSPH10B. Phosphorylated by PKA. Phosphorylation increases in capacitated sperm. Expressed in sperm and testis (at protein level).

It localises to the cytoplasm. The protein localises to the cytoskeleton. Its subcellular location is the flagellum axoneme. Functions as part of radial spoke complexes in the axoneme of sperm flagella that play an important part in motility. The triple radial spokes (RS1, RS2 and RS3) are required to modulate beating of the sperm flagellum. The chain is Radial spoke head protein 6 homolog A from Mus musculus (Mouse).